A 44-amino-acid polypeptide reads, in one-letter code: Conotoxin Cl9a (44 aa).

4-carboxyglutamate is present on residues E7, E8, and E24. Cystine bridges form between C9/C33, C15/C40, and C23/C42.

As to expression, expressed by the venom duct.

It is found in the secreted. This is Conotoxin Cl9a from Californiconus californicus (California cone).